Reading from the N-terminus, the 1442-residue chain is Death-associated protein kinase 1 (1442 aa).

The Protein kinase domain maps to 13 to 275; the sequence is YDTGEELGSG…IQDSLQHPWI (263 aa). Residues 19-27 and Lys42 contribute to the ATP site; that span reads LGSGQFAVV. Asp139 functions as the Proton acceptor in the catalytic mechanism. Positions 267–334 are calmodulin-binding; sequence QDSLQHPWIK…RSNMSVARSD (68 aa). The residue at position 289 (Ser289) is a Phosphoserine; by RPS6KA1 and RPS6KA3. The tract at residues 292 to 301 is autoinhibitory domain; that stretch reads NMEKFKKFAA. A Phosphoserine; by autocatalysis modification is found at Ser308. A phosphoserine mark is found at Ser319 and Ser333. 8 ANK repeats span residues 378 to 407, 411 to 440, 444 to 473, 477 to 506, 510 to 539, 543 to 572, 576 to 605, and 609 to 638; these read HGTP…RIDV, GGSN…PLDV, SGET…NPDF, EEET…NVNI, EGET…DLNA, DGHI…FVDF, HGNT…NLDI, and YGRT…NVEA. The Roc domain maps to 681-955; sequence TQNLQPRIKL…NHLQEIRSQI (275 aa). Ser734 is modified (phosphoserine; by MAPK1). One copy of the ANK 9 repeat lies at 875 to 904; that stretch reads KLKNPLRVVLVATHADIMNIPRPAGGEFGY. Position 1115 is a phosphoserine (Ser1115). An ANK 10 repeat occupies 1164 to 1196; it reads DADIRLWVSGCRIANRGAELLVLLVNHGQGIEV. A Death domain is found at 1312-1396; it reads KLSRLLDPPD…DAADFLLKAS (85 aa). Ser1433 carries the phosphoserine modification.

It belongs to the protein kinase superfamily. CAMK Ser/Thr protein kinase family. DAP kinase subfamily. In terms of assembly, interacts with KLHL20. Interacts (via death domain) with MAPK1 and MAPK3. Interacts with MAP1B (via N-terminus). Interacts with PRKD1 in an oxidative stress-regulated manner. Interacts with PIN1, PDCD6, BECN1, TSC2 and STX1A. Interacts (via kinase domain) with DAPK3 (via kinase domain). Interacts with GRINB. Interacts (via death domain) with UNC5B (via death domain). Interacts with UNC5C (via death domain). Requires Mg(2+) as cofactor. In terms of processing, ubiquitinated by the BCR(KLHL20) E3 ubiquitin ligase complex, leading to its degradation by the proteasome. Post-translationally, in response to mitogenic stimulation (PMA or EGF), phosphorylated at Ser-289; phosphorylation suppresses DAPK1 pro-apoptotic function. Autophosphorylation at Ser-308 inhibits its catalytic activity. Phosphorylation at Ser-734 by MAPK1 increases its catalytic activity and promotes cytoplasmic retention of MAPK1. Endoplasmic-stress can cause dephosphorylation at Ser-308. In terms of tissue distribution, high levels in bladder, uterus, vas deferens, lung, liver and kidney.

The catalysed reaction is L-seryl-[protein] + ATP = O-phospho-L-seryl-[protein] + ADP + H(+). It carries out the reaction L-threonyl-[protein] + ATP = O-phospho-L-threonyl-[protein] + ADP + H(+). Its activity is regulated as follows. Activated by Ca(2+)/calmodulin. Regulated by a locking mechanism, involving autophosphorylation at Ser-308 and calmodulin binding. In the inactive state, Ser-308 is phosphorylated. Activation involves its dephosphorylation and a release-of-autoinhibition mechanism where binding of calmodulin induces a conformational change that relieves the steric block of the active site by the autoinhibitory domain. Activity is modulated by UNC5B and NTN1. UNC5B activates it by inhibiting the phosphorylation at Ser-308, whereas NTN1 inhibits UNC5B-mediated activation of DAPK1. Endoplasmic-stress activates by causing Ser-308 dephosphorylation. Functionally, calcium/calmodulin-dependent serine/threonine kinase involved in multiple cellular signaling pathways that trigger cell survival, apoptosis, and autophagy. Regulates both type I apoptotic and type II autophagic cell deaths signal, depending on the cellular setting. The former is caspase-dependent, while the latter is caspase-independent and is characterized by the accumulation of autophagic vesicles. Phosphorylates PIN1 resulting in inhibition of its catalytic activity, nuclear localization, and cellular function. Phosphorylates TPM1, enhancing stress fiber formation in endothelial cells. Phosphorylates STX1A and significantly decreases its binding to STXBP1. Phosphorylates PRKD1 and regulates JNK signaling by binding and activating PRKD1 under oxidative stress. Phosphorylates BECN1, reducing its interaction with BCL2 and BCL2L1 and promoting the induction of autophagy. Phosphorylates TSC2, disrupting the TSC1-TSC2 complex and stimulating mTORC1 activity in a growth factor-dependent pathway. Phosphorylates RPS6, MYL9 and DAPK3. Acts as a signaling amplifier of NMDA receptors at extrasynaptic sites for mediating brain damage in stroke. Cerebral ischemia recruits DAPK1 into the NMDA receptor complex and it phosphorylates GRINB at Ser-1303 inducing injurious Ca(2+) influx through NMDA receptor channels, resulting in an irreversible neuronal death. Required together with DAPK3 for phosphorylation of RPL13A upon interferon-gamma activation which is causing RPL13A involvement in transcript-selective translation inhibition. This chain is Death-associated protein kinase 1 (Dapk1), found in Mus musculus (Mouse).